The primary structure comprises 132 residues: MSMTDPIADFLTRIRNANMVRHESLEVPASKIKKDMAEILKNEGFIKDVEYIEDDKQGIIRVFLKYGKNNERVISGLKRISKPGLRSYVKSDEVPKVLNGLGIAIISTSEGVITDKEARAKKIGGEVLAYIW.

Belongs to the universal ribosomal protein uS8 family. In terms of assembly, part of the 30S ribosomal subunit. Contacts proteins S5 and S12.

Functionally, one of the primary rRNA binding proteins, it binds directly to 16S rRNA central domain where it helps coordinate assembly of the platform of the 30S subunit. The chain is Small ribosomal subunit protein uS8 from Pediococcus pentosaceus (strain ATCC 25745 / CCUG 21536 / LMG 10740 / 183-1w).